A 374-amino-acid polypeptide reads, in one-letter code: Putative heme chaperone HemW-like protein (374 aa).

A Radical SAM core domain is found at methionine 1–lysine 231.

This sequence belongs to the anaerobic coproporphyrinogen-III oxidase family. HemW subfamily.

Its subcellular location is the cytoplasm. Functionally, might be a heme chaperone; in E.coli heme binds independently of binding to [4Fe-4S] or S-adenosyl-L-methionine. The sequence is that of Putative heme chaperone HemW-like protein from Buchnera aphidicola subsp. Baizongia pistaciae (strain Bp).